The primary structure comprises 259 residues: Deoxyribose-phosphate aldolase (259 aa).

Catalysis depends on Asp102, which acts as the Proton donor/acceptor. Lys166 functions as the Schiff-base intermediate with acetaldehyde in the catalytic mechanism. Lys200 serves as the catalytic Proton donor/acceptor.

This sequence belongs to the DeoC/FbaB aldolase family. DeoC type 2 subfamily.

Its subcellular location is the cytoplasm. It carries out the reaction 2-deoxy-D-ribose 5-phosphate = D-glyceraldehyde 3-phosphate + acetaldehyde. Its pathway is carbohydrate degradation; 2-deoxy-D-ribose 1-phosphate degradation; D-glyceraldehyde 3-phosphate and acetaldehyde from 2-deoxy-alpha-D-ribose 1-phosphate: step 2/2. Functionally, catalyzes a reversible aldol reaction between acetaldehyde and D-glyceraldehyde 3-phosphate to generate 2-deoxy-D-ribose 5-phosphate. This Vibrio cholerae serotype O1 (strain ATCC 39315 / El Tor Inaba N16961) protein is Deoxyribose-phosphate aldolase.